A 180-amino-acid polypeptide reads, in one-letter code: NAD(P)H-quinone oxidoreductase subunit I, chloroplastic (180 aa).

4Fe-4S ferredoxin-type domains lie at 55 to 84 (GRIHFEFDKCIACEVCVRVCPIDLPVVDWK) and 95 to 124 (LNYSIDFGICIFCGNCVEYCPTNCLSMTEE). Positions 64, 67, 70, 74, 104, 107, 110, and 114 each coordinate [4Fe-4S] cluster.

Belongs to the complex I 23 kDa subunit family. As to quaternary structure, NDH is composed of at least 16 different subunits, 5 of which are encoded in the nucleus. [4Fe-4S] cluster serves as cofactor.

Its subcellular location is the plastid. The protein localises to the chloroplast thylakoid membrane. The catalysed reaction is a plastoquinone + NADH + (n+1) H(+)(in) = a plastoquinol + NAD(+) + n H(+)(out). The enzyme catalyses a plastoquinone + NADPH + (n+1) H(+)(in) = a plastoquinol + NADP(+) + n H(+)(out). In terms of biological role, NDH shuttles electrons from NAD(P)H:plastoquinone, via FMN and iron-sulfur (Fe-S) centers, to quinones in the photosynthetic chain and possibly in a chloroplast respiratory chain. The immediate electron acceptor for the enzyme in this species is believed to be plastoquinone. Couples the redox reaction to proton translocation, and thus conserves the redox energy in a proton gradient. The protein is NAD(P)H-quinone oxidoreductase subunit I, chloroplastic of Ranunculus macranthus (Large buttercup).